We begin with the raw amino-acid sequence, 347 residues long: S-adenosylmethionine:tRNA ribosyltransferase-isomerase (347 aa).

The protein belongs to the QueA family. As to quaternary structure, monomer.

The protein resides in the cytoplasm. It carries out the reaction 7-aminomethyl-7-carbaguanosine(34) in tRNA + S-adenosyl-L-methionine = epoxyqueuosine(34) in tRNA + adenine + L-methionine + 2 H(+). The protein operates within tRNA modification; tRNA-queuosine biosynthesis. In terms of biological role, transfers and isomerizes the ribose moiety from AdoMet to the 7-aminomethyl group of 7-deazaguanine (preQ1-tRNA) to give epoxyqueuosine (oQ-tRNA). The polypeptide is S-adenosylmethionine:tRNA ribosyltransferase-isomerase (Pseudomonas aeruginosa (strain LESB58)).